A 269-amino-acid polypeptide reads, in one-letter code: Tryptophan synthase alpha chain (269 aa).

Catalysis depends on proton acceptor residues E50 and D61.

This sequence belongs to the TrpA family. As to quaternary structure, tetramer of two alpha and two beta chains.

It carries out the reaction (1S,2R)-1-C-(indol-3-yl)glycerol 3-phosphate + L-serine = D-glyceraldehyde 3-phosphate + L-tryptophan + H2O. Its pathway is amino-acid biosynthesis; L-tryptophan biosynthesis; L-tryptophan from chorismate: step 5/5. In terms of biological role, the alpha subunit is responsible for the aldol cleavage of indoleglycerol phosphate to indole and glyceraldehyde 3-phosphate. This Francisella tularensis subsp. tularensis (strain FSC 198) protein is Tryptophan synthase alpha chain.